The primary structure comprises 118 residues: Large ribosomal subunit protein bL20 (118 aa).

Belongs to the bacterial ribosomal protein bL20 family.

Functionally, binds directly to 23S ribosomal RNA and is necessary for the in vitro assembly process of the 50S ribosomal subunit. It is not involved in the protein synthesizing functions of that subunit. This chain is Large ribosomal subunit protein bL20, found in Azotobacter vinelandii (strain DJ / ATCC BAA-1303).